Reading from the N-terminus, the 469-residue chain is Rubisco accumulation factor 1, chloroplastic (469 aa).

Residues 1 to 46 constitute a chloroplast transit peptide; it reads MLSLSHPHPHPASTTAAAAARHHHRRNAPFAPHHRRRRRFAHLTTS. The tract at residues 1–78 is disordered; that stretch reads MLSLSHPHPH…TPPPTAPPDQ (78 aa). Residues 20–41 show a composition bias toward basic residues; that stretch reads ARHHHRRNAPFAPHHRRRRRFA. The tract at residues 90 to 281 is N-terminal alpha-helix; that stretch reads LPDKYKDLDL…PARARVEAEL (192 aa). Residues 246-294 are a coiled coil; it reads RQSREAIDAEDSVAELERALEVVDTEPARARVEAELDRARRKAAGEEVD. Positions 311–456 are C-terminal beta sheet; sequence VPVVRLMYGE…AEVLVVVRPP (146 aa).

Belongs to the RAF family.

It localises to the plastid. The protein resides in the chloroplast. In terms of biological role, required for assembly or stability of RuBisCO. Acts at a postchaperonin step to fold and/or assemble the large subunit (LS) into RuBisCO. This Oryza sativa subsp. japonica (Rice) protein is Rubisco accumulation factor 1, chloroplastic (RAF1).